The following is a 197-amino-acid chain: Probable thymidylate kinase (197 aa).

ATP is bound at residue 7 to 14; the sequence is GLDGSGKT.

The protein belongs to the thymidylate kinase family.

The enzyme catalyses dTMP + ATP = dTDP + ADP. The polypeptide is Probable thymidylate kinase (Halorubrum lacusprofundi (strain ATCC 49239 / DSM 5036 / JCM 8891 / ACAM 34)).